The primary structure comprises 138 residues: ATP synthase epsilon chain (138 aa).

This sequence belongs to the ATPase epsilon chain family. In terms of assembly, F-type ATPases have 2 components, CF(1) - the catalytic core - and CF(0) - the membrane proton channel. CF(1) has five subunits: alpha(3), beta(3), gamma(1), delta(1), epsilon(1). CF(0) has three main subunits: a, b and c.

It is found in the cell inner membrane. Produces ATP from ADP in the presence of a proton gradient across the membrane. In Polaromonas naphthalenivorans (strain CJ2), this protein is ATP synthase epsilon chain.